We begin with the raw amino-acid sequence, 62 residues long: Large ribosomal subunit protein bL28 (62 aa).

The protein belongs to the bacterial ribosomal protein bL28 family.

The protein is Large ribosomal subunit protein bL28 of Thermoanaerobacter sp. (strain X514).